Reading from the N-terminus, the 473-residue chain is DNA (cytosine-5)-methyltransferase DRM1A (473 aa).

The UBA 1 domain maps to 20–61 (SAPSALVAYFLGMGFSREMVFRAIKEIGDTDSEQILELLLTY). The segment covering 84-101 (EEEDEEEDVNWDEDDTVD) has biased composition (acidic residues). The segment at 84-115 (EEEDEEEDVNWDEDDTVDNFDRATYSDGSGDE) is disordered. One can recognise a UBA 2 domain in the interval 120–140 (EMSEKDEKIKSLVSMGFPEDE). The region spanning 204–431 (VHRNLPDQAL…DSVKTIMASI (228 aa)) is the SAM-dependent MTase DRM-type domain.

It belongs to the class I-like SAM-binding methyltransferase superfamily. DRM-methyltransferase family.

It is found in the nucleus. It catalyses the reaction a 2'-deoxycytidine in DNA + S-adenosyl-L-methionine = a 5-methyl-2'-deoxycytidine in DNA + S-adenosyl-L-homocysteine + H(+). Involved in de novo DNA methylation. Involved in RNA-directed DNA methylation (RdDM). The chain is DNA (cytosine-5)-methyltransferase DRM1A from Oryza sativa subsp. japonica (Rice).